The following is a 312-amino-acid chain: Olfactory receptor 5P4 (312 aa).

The Extracellular portion of the chain corresponds to 1 to 25; that stretch reads METENDTMVTEFIILGLTDSATLRA. N5 is a glycosylation site (N-linked (GlcNAc...) asparagine). The helical transmembrane segment at 26-46 threads the bilayer; the sequence is ILFVFFLPVYIVTVVGNISII. Residues 47-54 are Cytoplasmic-facing; sequence LLIRSSPQ. Residues 55-75 traverse the membrane as a helical segment; the sequence is LHTPMYLFLSHLAFVDIGYST. Residues 76-99 lie on the Extracellular side of the membrane; that stretch reads SVTPIMLISFLREETTIPLAGCAA. A disulfide bridge connects residues C97 and C189. The chain crosses the membrane as a helical span at residues 100 to 120; it reads QLGSDVAFGTTECFLLATMAY. Residues 121–133 lie on the Cytoplasmic side of the membrane; sequence DRYVAICSPLLYS. A helical membrane pass occupies residues 134-154; that stretch reads TQMSPAICCFLLGASYLGGCM. Residues 155-196 are Extracellular-facing; it reads NASSFTGCFVNLNFCGPNKVNHFFCDLFPLVKLSCGHAYIAE. A helical membrane pass occupies residues 197–217; the sequence is ISPSISSASVLVSTLSTIIVS. At 218 to 237 the chain is on the cytoplasmic side; sequence YIYILHSILRMRSAEGRNKA. Residues 238 to 258 traverse the membrane as a helical segment; the sequence is FSTCTSHLTAVTLFYGTVLFV. Residues 259 to 271 lie on the Extracellular side of the membrane; sequence YVMPKSSYSADQV. Residues 272–292 traverse the membrane as a helical segment; it reads KVASVVYTVVIPMLNPLIYSL. Topologically, residues 293–312 are cytoplasmic; sequence RNKEVKEAMKKLMARTHWFP.

Belongs to the G-protein coupled receptor 1 family.

It is found in the cell membrane. Potential odorant receptor. This chain is Olfactory receptor 5P4, found in Mus musculus (Mouse).